A 555-amino-acid chain; its full sequence is Chaperonin GroEL 2 (555 aa).

Residues 29-32 (TLGP), 86-90 (DGTTT), G414, 480-482 (NAL), and D496 each bind ATP.

It belongs to the chaperonin (HSP60) family. In terms of assembly, forms a cylinder of 14 subunits composed of two heptameric rings stacked back-to-back. Interacts with the co-chaperonin GroES.

The protein localises to the cytoplasm. The catalysed reaction is ATP + H2O + a folded polypeptide = ADP + phosphate + an unfolded polypeptide.. Functionally, together with its co-chaperonin GroES, plays an essential role in assisting protein folding. The GroEL-GroES system forms a nano-cage that allows encapsulation of the non-native substrate proteins and provides a physical environment optimized to promote and accelerate protein folding. The sequence is that of Chaperonin GroEL 2 from Synechococcus sp. (strain ATCC 27144 / PCC 6301 / SAUG 1402/1) (Anacystis nidulans).